We begin with the raw amino-acid sequence, 345 residues long: MNSELFSPYTIKDVTLKNRIVMSPMCMYSSENEDGQVTNFHLIHYGTRAAGQVGLVMIEATAVLPEGRISNKDLGIWDDSLIEGLHKTTTFIHDNGAKAAIQLAHAGRKAELETDALAPSAVPFNETMKIPVEMSIQQIKNTILAFQQAAVRSKQAGFDVIEIHGAHGYLINEFLSPLSNKRTDEYGGSPEKRYRFLREIIDSINEVWNGPLFVRISANDYHPDGLTVQDYVQYTKWMKEQGVDLIDCSSGAVVPARIDVYPGYQVQYAKHIKEHANIATGAVGLITTGAQAEQILTNNEADLIFIGRELLRNPYFPRIAANELGFELEEPYQYERAPGKISTNK.

23–26 contributes to the FMN binding site; the sequence is SPMC. Y28 provides a ligand contact to substrate. FMN is bound by residues A60 and Q102. 164 to 167 is a substrate binding site; it reads HGAH. FMN is bound by residues R215 and 307-308; that span reads GR.

The protein belongs to the NADH:flavin oxidoreductase/NADH oxidase family. NamA subfamily. As to quaternary structure, homotetramer. Requires FMN as cofactor.

The enzyme catalyses A + NADPH + H(+) = AH2 + NADP(+). Catalyzes the reduction of the double bond of an array of alpha,beta-unsaturated aldehydes and ketones. It also reduces the nitro group of nitroester and nitroaromatic compounds. It could have a role in detoxification processes. The polypeptide is NADPH dehydrogenase (Bacillus thuringiensis (strain Al Hakam)).